Consider the following 289-residue polypeptide: HTH-type transcriptional regulator HexR (289 aa).

The region spanning methionine 1–glycine 77 is the HTH rpiR-type domain. The segment at residues isoleucine 37 to arginine 56 is a DNA-binding region (H-T-H motif). The SIS domain occupies alanine 121–alanine 260.

Functionally, represses the expression of the hex regulon (zwf, eda, glp and gap). The polypeptide is HTH-type transcriptional regulator HexR (hexR) (Escherichia coli (strain K12)).